The chain runs to 371 residues: 4-hydroxy-3-methylbut-2-en-1-yl diphosphate synthase (flavodoxin) (371 aa).

Positions 270, 273, 305, and 312 each coordinate [4Fe-4S] cluster.

The protein belongs to the IspG family. It depends on [4Fe-4S] cluster as a cofactor.

It catalyses the reaction (2E)-4-hydroxy-3-methylbut-2-enyl diphosphate + oxidized [flavodoxin] + H2O + 2 H(+) = 2-C-methyl-D-erythritol 2,4-cyclic diphosphate + reduced [flavodoxin]. It participates in isoprenoid biosynthesis; isopentenyl diphosphate biosynthesis via DXP pathway; isopentenyl diphosphate from 1-deoxy-D-xylulose 5-phosphate: step 5/6. Its function is as follows. Converts 2C-methyl-D-erythritol 2,4-cyclodiphosphate (ME-2,4cPP) into 1-hydroxy-2-methyl-2-(E)-butenyl 4-diphosphate. The polypeptide is 4-hydroxy-3-methylbut-2-en-1-yl diphosphate synthase (flavodoxin) (Shewanella pealeana (strain ATCC 700345 / ANG-SQ1)).